The chain runs to 432 residues: C(50) beta-cyclic carotenoids biosynthesis protein LbtBC (432 aa).

The segment at 1 to 140 is beta-cyclase; the sequence is MTSLYTTLNL…DDDEVRTPER (140 aa). A run of 3 helical transmembrane segments spans residues 4-24, 36-56, and 83-103; these read LYTTLNLTMSIPVVAVALLAA, LIGVGGALLILMILTAVFDNI, and FAYAVAAAVFVPSVWALLTAS. A disordered region spans residues 111–140; it reads GSPTVSGRGDALLTRAPEPGDDDEVRTPER. Positions 141–432 are elongase/hydratase; sequence PGTPGLLTTL…IVLWSVLVWS (292 aa). The next 7 membrane-spanning stretches (helical) occupy residues 170–190, 252–272, 277–297, 299–319, 350–370, 374–394, and 409–429; these read YFLATGGFDLVGVIGTIFFLV, ESSLWLAASAFAVIAYSAKGL, IPFLDSLTSAFHFVSPAIVGW, IAGAELTGGVWACLIAFMLWG, AAVWFALACYVAAVVVLLAAA, ASGAAFAILPYLATVAAYVGV, and FLVLNMLAGFCVTQIVLWSVL.

The protein belongs to the UbiA prenyltransferase family. In terms of assembly, may form a complex with LbtA.

It localises to the cell membrane. It catalyses the reaction all-trans-lycopene + dimethylallyl diphosphate + H2O = dihydroisopentenyldehydrorhodopin + diphosphate. It carries out the reaction isopentenyldehydrorhodopin + dimethylallyl diphosphate + H2O = dihydrobisanhydrobacterioruberin + diphosphate. It functions in the pathway carotenoid biosynthesis. Functionally, involved in the biosynthesis of C(50) beta-cyclic carotenoids. The elongase/hydratase domain catalyzes the elongation of lycopene by attaching a C(5) isoprene unit at C-2, as well as the hydroxylation of the previous end of the molecule. The enzyme acts at both ends of the substrate, and catalyzes the conversion of lycopene to the C(45) intermediate dihydroisopentenyldehydrorhodopin (DH-IDR) and the conversion of isopentenyldehydrorhodopin (IDR) to the C(50) carotenoid dihydrobisanhydrobacterioruberin (DH-BABR). The beta-cyclase domain may produce the C(50) beta-cyclic carotenoid C.p.450 from the C(50) carotenoid dihydrobisanhydrobacterioruberin (DH-BABR). This Dietzia sp. (strain CQ4) protein is C(50) beta-cyclic carotenoids biosynthesis protein LbtBC.